A 361-amino-acid polypeptide reads, in one-letter code: Alanine racemase 2 (361 aa).

Lysine 30 acts as the Proton acceptor; specific for D-alanine in catalysis. Lysine 30 is subject to N6-(pyridoxal phosphate)lysine. Arginine 122 serves as a coordination point for substrate. Tyrosine 256 (proton acceptor; specific for L-alanine) is an active-site residue. Substrate is bound at residue methionine 303.

Belongs to the alanine racemase family. Requires pyridoxal 5'-phosphate as cofactor.

The enzyme catalyses L-alanine = D-alanine. Its pathway is amino-acid biosynthesis; D-alanine biosynthesis; D-alanine from L-alanine: step 1/1. Its function is as follows. Catalyzes the interconversion of L-alanine and D-alanine. May also act on other amino acids. This chain is Alanine racemase 2 (alr2), found in Staphylococcus aureus (strain COL).